A 224-amino-acid chain; its full sequence is Zinc finger protein 22 (224 aa).

The interval Met-1–Gly-34 is disordered. N6-acetyllysine is present on residues Lys-18 and Lys-23. Ser-49 is modified (phosphoserine). 5 C2H2-type zinc fingers span residues Tyr-55–His-77, His-83–His-105, Tyr-111–His-133, Tyr-139–His-161, and Tyr-167–His-189.

Belongs to the krueppel C2H2-type zinc-finger protein family. As to expression, in the embryo, expressed in developing craniofacial structures including dental epithelium of maxillary molar tooth organs, tongue epithelium and muscle, and craniofacial bone osteoblasts. In the adult, expressed in mesoderm-derived tissues such as skeletal muscle, heart, kidney and liver. Intermediate expression in spleen, thymus and brain. Low levels in endoderm-derived tissues such as intestine and colon.

It is found in the nucleus. In terms of biological role, binds DNA through the consensus sequence 5'-CAATG-3'. May be involved in transcriptional regulation and may play a role in tooth formation. This is Zinc finger protein 22 (ZNF22) from Homo sapiens (Human).